The sequence spans 521 residues: Leucine-rich repeat-containing protein 24 (521 aa).

Residues 1–23 (MALRAPTLLLLLLGLLLLPLLPG) form the signal peptide. One can recognise an LRRNT domain in the interval 24–58 (LPPRATGCPAACRCYSATVECGALRLRVVPPGIPP). LRR repeat units lie at residues 59-80 (GTQT…SLAP), 83-104 (ALRH…AFRA), 107-128 (RLLE…AFVG), 131-152 (QLRV…TFLH), 155-176 (RLQE…ALAG), and 179-200 (SLAL…ALQP). Residue asparagine 91 is glycosylated (N-linked (GlcNAc...) asparagine). The region spanning 212–267 (NPWRCDCALHWLGSWIKEGGRRLLSSRDKKITCAEPPRLALQSLLEVSGGSLICIP) is the LRRCT domain. The region spanning 268–371 (PSVNVEPPEF…ARVPFHLLVN (104 aa)) is the Ig-like C2-type domain. Cysteines 289 and 353 form a disulfide. A disordered region spans residues 306 to 330 (QPRDGKPQAQAQLEGGAPGLGGHGT). 2 N-linked (GlcNAc...) asparagine glycosylation sites follow: asparagine 342 and asparagine 371. The interval 374-395 (RQQSQQLPDPQAPATRPVGHEP) is disordered. The chain crosses the membrane as a helical span at residues 414–434 (AITAAIALLALTALLLAAMIC).

The protein localises to the membrane. The polypeptide is Leucine-rich repeat-containing protein 24 (Lrrc24) (Mus musculus (Mouse)).